The sequence spans 71 residues: uncharacterized protein (71 aa).

The segment covering M1 to K10 has biased composition (basic residues). Positions M1–N20 are disordered. The chain crosses the membrane as a helical span at residues L21–I43.

It localises to the membrane. This is an uncharacterized protein from Saccharomyces cerevisiae (strain ATCC 204508 / S288c) (Baker's yeast).